Here is a 528-residue protein sequence, read N- to C-terminus: Low affinity inorganic phosphate transporter 4 (528 aa).

Residues 1–18 (MALEVLEALDSARTQWYH) are Cytoplasmic-facing. The helical transmembrane segment at 19–39 (VTAIVIAGMGFFTDAYDLFCI) threads the bilayer. Over 40-68 (TTVSKLLGRLYYFDPSTGKPGKLPNNVNN) the chain is Extracellular. The helical transmembrane segment at 69-89 (LVTGVALVGTLSGQLFFGYLG) threads the bilayer. Residues 90 to 96 (DKLGRKK) are Cytoplasmic-facing. A helical membrane pass occupies residues 97-117 (VYGVTLILMVACAICSGLSFG). Residues 118-122 (ASAKS) are Extracellular-facing. A helical transmembrane segment spans residues 123-143 (VMGTLCFFRFWLGFGIGGDYP). Topologically, residues 144–158 (LSATIMSEYANKRTR) are cytoplasmic. The chain crosses the membrane as a helical span at residues 159 to 179 (GAFIAAVFAMQGVGIIFAGLV). The Extracellular segment spans residues 180-208 (SMCLSAGFKASYHAPSFHDDPIMSTQPQG). Residues 209–229 (DLMWRLVLMIGAVPAAMTYYW) form a helical membrane-spanning segment. The Cytoplasmic portion of the chain corresponds to 230 to 292 (RMKMPETGRY…NEFFTRHGRH (63 aa)). The chain crosses the membrane as a helical span at residues 293–313 (LIGTMTSWFLLDIAFYSQNLT). Topologically, residues 314-341 (QKDIFPAMGLIDKDFEMNAIQEVFETSR) are extracellular. Residues 342–362 (AMFVIALFGTFPGYWFTVFFI) traverse the membrane as a helical segment. Residues 363-371 (EKLGRYKIQ) are Cytoplasmic-facing. Residues 372-392 (LIGFFMMSVFMFIIGVKYDYL) traverse the membrane as a helical segment. Residues 393-401 (RNENSHMFA) lie on the Extracellular side of the membrane. A helical membrane pass occupies residues 402 to 422 (LLYGLTFFFANFGPNSTTFVL). Residues 423–433 (PAELFPTRVRS) lie on the Cytoplasmic side of the membrane. The helical transmembrane segment at 434-454 (TCHALSAAAGKAGAMVGAFGI) threads the bilayer. Topologically, residues 455 to 467 (QNYTQKGEQKQIK) are extracellular. The N-linked (GlcNAc...) asparagine glycan is linked to asparagine 456. Residues 468–488 (HAMMILAVTNLIGFFCSFLVT) traverse the membrane as a helical segment. At 489-528 (ETKGRSLEEISGEDGRESELTPTPPNNRVPTRQEPRSETM) the chain is on the cytoplasmic side. Composition is skewed to basic and acidic residues over residues 496–507 (EEISGEDGRESE) and 519–528 (TRQEPRSETM). The disordered stretch occupies residues 496–528 (EEISGEDGRESELTPTPPNNRVPTRQEPRSETM).

This sequence belongs to the major facilitator superfamily. Phosphate:H(+) symporter (TC 2.A.1.9) family. In terms of tissue distribution, expressed only in mycorrhizal roots, exclusively in cortical cells containing arbuscules, upon arbuscular mycorrhizal (AM) symbiosis with AM fungi (e.g. Gigaspora margarita and Funnelliformis mosseae). Also observed in root tips of non-mycorrhizal roots, in a phosphate (Pi) depended-manner, highest expression levels being observed in low Pi conditions.

Its subcellular location is the cell membrane. It carries out the reaction phosphate(in) + H(+)(in) = phosphate(out) + H(+)(out). Its function is as follows. Low-affinity transporter for external inorganic phosphate (Pi) probably involved in the acquisition of phosphate released by arbuscular mycorrhizal (AM) fungi (e.g. Gigaspora margarita and Funnelliformis mosseae) during AM symbiosis; required for propper mycorrhizal arbuscule morphology. Acts as a Pi-sensing machinery at the root tip level, independently of AM fungi, involved in the regulation of early root branching and lateral roots formation. This Lotus japonicus (Lotus corniculatus var. japonicus) protein is Low affinity inorganic phosphate transporter 4.